The following is a 35-amino-acid chain: Dermonecrotic toxin LgSicTox-beta-LOXN4 (35 aa).

D20 serves as a coordination point for Mg(2+).

It belongs to the arthropod phospholipase D family. Class II subfamily. It depends on Mg(2+) as a cofactor. Post-translationally, contains 2 disulfide bonds. In terms of tissue distribution, expressed by the venom gland.

Its subcellular location is the secreted. It catalyses the reaction an N-(acyl)-sphingosylphosphocholine = an N-(acyl)-sphingosyl-1,3-cyclic phosphate + choline. The enzyme catalyses an N-(acyl)-sphingosylphosphoethanolamine = an N-(acyl)-sphingosyl-1,3-cyclic phosphate + ethanolamine. It carries out the reaction a 1-acyl-sn-glycero-3-phosphocholine = a 1-acyl-sn-glycero-2,3-cyclic phosphate + choline. The catalysed reaction is a 1-acyl-sn-glycero-3-phosphoethanolamine = a 1-acyl-sn-glycero-2,3-cyclic phosphate + ethanolamine. Dermonecrotic toxins cleave the phosphodiester linkage between the phosphate and headgroup of certain phospholipids (sphingolipid and lysolipid substrates), forming an alcohol (often choline) and a cyclic phosphate. This toxin acts on sphingomyelin (SM). It may also act on ceramide phosphoethanolamine (CPE), lysophosphatidylcholine (LPC) and lysophosphatidylethanolamine (LPE), but not on lysophosphatidylserine (LPS), and lysophosphatidylglycerol (LPG). It acts by transphosphatidylation, releasing exclusively cyclic phosphate products as second products. Induces dermonecrosis, hemolysis, increased vascular permeability, edema, inflammatory response, and platelet aggregation. The chain is Dermonecrotic toxin LgSicTox-beta-LOXN4 from Loxosceles gaucho (Spider).